The following is a 1107-amino-acid chain: Unconventional myosin-Ib (1107 aa).

Positions 15 to 701 constitute a Myosin motor domain; sequence IGVGDMVLLE…TLFQLEDLRK (687 aa). At Ser60 the chain carries Phosphoserine. 108 to 115 contacts ATP; the sequence is GESGAGKT. Lys287 is covalently cross-linked (Glycyl lysine isopeptide (Lys-Gly) (interchain with G-Cter in SUMO1); alternate). A Glycyl lysine isopeptide (Lys-Gly) (interchain with G-Cter in SUMO2); alternate cross-link involves residue Lys287. Residues 592 to 599 are actin-binding; that stretch reads YIRCIKPN. IQ domains are found at residues 704 to 727, 728 to 749, 750 to 778, 780 to 807, and 808 to 837; these read LEDL…FLLM, KRSQ…RYQQ, IKSS…HQKR, KEAA…EEAR, and RKHA…ANAG. The TH1 domain occupies 923–1107; it reads KALYPSSVGQ…NNRLLEVAVP (185 aa).

The protein belongs to the TRAFAC class myosin-kinesin ATPase superfamily. Myosin family. Prominent expression is seen in the brain, lung and liver. It is also expressed in the heart and testis. A high level expression is seen in virtually all neurons (but not glia) in the postnatal and adult mouse brain and in neuroblasts of the cerebellar external granular layer.

Functionally, motor protein that may participate in process critical to neuronal development and function such as cell migration, neurite outgrowth and vesicular transport. This is Unconventional myosin-Ib (Myo1b) from Mus musculus (Mouse).